The primary structure comprises 124 residues: MTKTKQEIYNKRPTSPHLTIYKPQISSTLSILYRMTGVALFFAVSILVWWLILSKYDNNYLQLAECCIIKICLVAVSYAWFYHLCNGIRHLFWDIGYGFSIKLVNITGWCVVVGSVLLTVLLWV.

Residues 1 to 29 (MTKTKQEIYNKRPTSPHLTIYKPQISSTL) are Cytoplasmic-facing. Residues 30 to 55 (SILYRMTGVALFFAVSILVWWLILSK) traverse the membrane as a helical segment. Over 56-67 (YDNNYLQLAECC) the chain is Periplasmic. Residues 68–88 (IIKICLVAVSYAWFYHLCNGI) traverse the membrane as a helical segment. Position 83 (H83) interacts with heme. The Cytoplasmic segment spans residues 89 to 103 (RHLFWDIGYGFSIKL). The chain crosses the membrane as a helical span at residues 104 to 124 (VNITGWCVVVGSVLLTVLLWV).

It belongs to the cytochrome b560 family. Part of an enzyme complex containing four subunits: a flavoprotein, an iron-sulfur protein, plus two membrane-anchoring proteins, SdhC and SdhD. The complex can form homotrimers. Heme serves as cofactor.

Its subcellular location is the cell inner membrane. It functions in the pathway carbohydrate metabolism; tricarboxylic acid cycle. Functionally, membrane-anchoring subunit of succinate dehydrogenase (SDH). This Rickettsia conorii (strain ATCC VR-613 / Malish 7) protein is Succinate dehydrogenase cytochrome b556 subunit (sdhC).